Reading from the N-terminus, the 352-residue chain is Chorismate synthase (352 aa).

NADP(+) contacts are provided by arginine 48 and arginine 54. FMN is bound by residues arginine 125–serine 127, asparagine 238–alanine 239, alanine 278, lysine 293–serine 297, and arginine 319.

Belongs to the chorismate synthase family. Homotetramer. The cofactor is FMNH2.

It carries out the reaction 5-O-(1-carboxyvinyl)-3-phosphoshikimate = chorismate + phosphate. The protein operates within metabolic intermediate biosynthesis; chorismate biosynthesis; chorismate from D-erythrose 4-phosphate and phosphoenolpyruvate: step 7/7. In terms of biological role, catalyzes the anti-1,4-elimination of the C-3 phosphate and the C-6 proR hydrogen from 5-enolpyruvylshikimate-3-phosphate (EPSP) to yield chorismate, which is the branch point compound that serves as the starting substrate for the three terminal pathways of aromatic amino acid biosynthesis. This reaction introduces a second double bond into the aromatic ring system. This Coxiella burnetii (strain RSA 493 / Nine Mile phase I) protein is Chorismate synthase.